We begin with the raw amino-acid sequence, 366 residues long: Holliday junction branch migration complex subunit RuvB (366 aa).

The segment at 1 to 48 is disordered; that stretch reads MIDRLMAREAIYQQSNPDPGGDPPEDGPPHGKNAADGGDEPDRGPDPD. Residues 21 to 212 form a large ATPase domain (RuvB-L) region; sequence GDPPEDGPPH…FQIREHLGWY (192 aa). ATP contacts are provided by residues L51, R52, G93, K96, T97, T98, 159–161, R202, Y212, and R249; that span reads EDF. T97 contacts Mg(2+). A small ATPAse domain (RuvB-S) region spans residues 213–283; sequence TRKELAEIVL…VCEAALDMIG (71 aa). The segment at 286-366 is head domain (RuvB-H); it reads HLGLDKQDRN…KRQMPDRPLS (81 aa). Residues R341, R343, and R346 each coordinate DNA.

The protein belongs to the RuvB family. Homohexamer. Forms an RuvA(8)-RuvB(12)-Holliday junction (HJ) complex. HJ DNA is sandwiched between 2 RuvA tetramers; dsDNA enters through RuvA and exits via RuvB. An RuvB hexamer assembles on each DNA strand where it exits the tetramer. Each RuvB hexamer is contacted by two RuvA subunits (via domain III) on 2 adjacent RuvB subunits; this complex drives branch migration. In the full resolvosome a probable DNA-RuvA(4)-RuvB(12)-RuvC(2) complex forms which resolves the HJ.

Its subcellular location is the cytoplasm. The enzyme catalyses ATP + H2O = ADP + phosphate + H(+). In terms of biological role, the RuvA-RuvB-RuvC complex processes Holliday junction (HJ) DNA during genetic recombination and DNA repair, while the RuvA-RuvB complex plays an important role in the rescue of blocked DNA replication forks via replication fork reversal (RFR). RuvA specifically binds to HJ cruciform DNA, conferring on it an open structure. The RuvB hexamer acts as an ATP-dependent pump, pulling dsDNA into and through the RuvAB complex. RuvB forms 2 homohexamers on either side of HJ DNA bound by 1 or 2 RuvA tetramers; 4 subunits per hexamer contact DNA at a time. Coordinated motions by a converter formed by DNA-disengaged RuvB subunits stimulates ATP hydrolysis and nucleotide exchange. Immobilization of the converter enables RuvB to convert the ATP-contained energy into a lever motion, pulling 2 nucleotides of DNA out of the RuvA tetramer per ATP hydrolyzed, thus driving DNA branch migration. The RuvB motors rotate together with the DNA substrate, which together with the progressing nucleotide cycle form the mechanistic basis for DNA recombination by continuous HJ branch migration. Branch migration allows RuvC to scan DNA until it finds its consensus sequence, where it cleaves and resolves cruciform DNA. In Rhodopirellula baltica (strain DSM 10527 / NCIMB 13988 / SH1), this protein is Holliday junction branch migration complex subunit RuvB.